Consider the following 213-residue polypeptide: NADH-quinone oxidoreductase subunit C (213 aa).

This sequence belongs to the complex I 30 kDa subunit family. As to quaternary structure, NDH-1 is composed of 14 different subunits. Subunits NuoB, C, D, E, F, and G constitute the peripheral sector of the complex.

It localises to the cell inner membrane. The catalysed reaction is a quinone + NADH + 5 H(+)(in) = a quinol + NAD(+) + 4 H(+)(out). NDH-1 shuttles electrons from NADH, via FMN and iron-sulfur (Fe-S) centers, to quinones in the respiratory chain. The immediate electron acceptor for the enzyme in this species is believed to be ubiquinone. Couples the redox reaction to proton translocation (for every two electrons transferred, four hydrogen ions are translocated across the cytoplasmic membrane), and thus conserves the redox energy in a proton gradient. The protein is NADH-quinone oxidoreductase subunit C of Rhodospirillum rubrum (strain ATCC 11170 / ATH 1.1.1 / DSM 467 / LMG 4362 / NCIMB 8255 / S1).